We begin with the raw amino-acid sequence, 3919 residues long: Intermembrane lipid transfer protein Vps13D (3919 aa).

The 111-residue stretch at 4-114 (DLITWVLNTY…QDLEYKLAVL (111 aa)) folds into the Chorein N-terminal domain. A disordered region spans residues 706–736 (TSDDDETYLTPCSTPPASEKSGSESPTLLEN). Residues 2292-2334 (KADSDLEKAAPLVAMGFEISDCLYAMQINNWRINDAAIWLSQQ) enclose the UBA domain. The SHR-BD domain occupies 2837 to 3113 (ELYISAPVWI…YVMDDPLGQQ (277 aa)). Residues 3749–3768 (VRETSRDSHRNAPERKRLPR) form a disordered region. The span at 3751–3764 (ETSRDSHRNAPERK) shows a compositional bias: basic and acidic residues.

It belongs to the VPS13 family. As to expression, expressed in intestinal cells (at protein level).

The protein localises to the cytoplasm. Its subcellular location is the lysosome. Functionally, mediates the transfer of lipids between membranes at organelle contact sites. Functions in promoting mitochondrial clearance by mitochondrial autophagy (mitophagy), also possibly by positively regulating mitochondrial fission. Mitophagy plays an important role in regulating cell health and mitochondrial size and homeostasis. This chain is Intermembrane lipid transfer protein Vps13D, found in Drosophila melanogaster (Fruit fly).